The chain runs to 198 residues: dITP/XTP pyrophosphatase (198 aa).

7–12 is a binding site for substrate; that stretch reads TRNAGK. 2 residues coordinate Mg(2+): Glu-40 and Asp-69. Asp-69 functions as the Proton acceptor in the catalytic mechanism. Substrate-binding positions include Ser-70, 152–155, Lys-175, and 180–181; these read FGYD and HR.

It belongs to the HAM1 NTPase family. As to quaternary structure, homodimer. The cofactor is Mg(2+).

It carries out the reaction XTP + H2O = XMP + diphosphate + H(+). It catalyses the reaction dITP + H2O = dIMP + diphosphate + H(+). The catalysed reaction is ITP + H2O = IMP + diphosphate + H(+). Its function is as follows. Pyrophosphatase that catalyzes the hydrolysis of nucleoside triphosphates to their monophosphate derivatives, with a high preference for the non-canonical purine nucleotides XTP (xanthosine triphosphate), dITP (deoxyinosine triphosphate) and ITP. Seems to function as a house-cleaning enzyme that removes non-canonical purine nucleotides from the nucleotide pool, thus preventing their incorporation into DNA/RNA and avoiding chromosomal lesions. This chain is dITP/XTP pyrophosphatase, found in Exiguobacterium sibiricum (strain DSM 17290 / CCUG 55495 / CIP 109462 / JCM 13490 / 255-15).